A 200-amino-acid polypeptide reads, in one-letter code: Large ribosomal subunit protein uL4 (200 aa).

Positions 45–64 are disordered; it reads QKTRAEVSGGGIKPWRQKGT.

It belongs to the universal ribosomal protein uL4 family. In terms of assembly, part of the 50S ribosomal subunit.

Functionally, one of the primary rRNA binding proteins, this protein initially binds near the 5'-end of the 23S rRNA. It is important during the early stages of 50S assembly. It makes multiple contacts with different domains of the 23S rRNA in the assembled 50S subunit and ribosome. Forms part of the polypeptide exit tunnel. This Psychrobacter cryohalolentis (strain ATCC BAA-1226 / DSM 17306 / VKM B-2378 / K5) protein is Large ribosomal subunit protein uL4.